The sequence spans 295 residues: MTMTEEKPTSDGKGGWGFFKIPFRNSSGHRNAASSAATSPFPSGASSSSTSSHLHNHHQHHHQHHHQHHHQLGYNGPHGDGSGQNQHPTPSPSVSSVAKSFLPTKRRLKLDPSEKLYFPYEPGKQVRSAIKIKNTSKSHVAFKFQTTAPKSCFMRPPGAILAPGETIIATVFKFVEPPENNEKPMDQRSRVKFKIMSLKVKGPMDYVPELFDEQKDDVSKEQILRVIFLDPERSNPALEKLKRQLAEADAAVEARKKPPEETGPKMIGEGLVIDEWKERRERYLAQQQGEGADSV.

A compositionally biased stretch (basic and acidic residues) spans 1-10 (MTMTEEKPTS). The segment at 1-99 (MTMTEEKPTS…PSPSVSSVAK (99 aa)) is disordered. A compositionally biased stretch (low complexity) spans 31–53 (NAASSAATSPFPSGASSSSTSSH). Positions 54–71 (LHNHHQHHHQHHHQHHHQ) are enriched in basic residues. Residues 83-98 (GQNQHPTPSPSVSSVA) are compositionally biased toward polar residues. The MSP domain occupies 107–229 (RLKLDPSEKL…KEQILRVIFL (123 aa)). The span at 249-263 (DAAVEARKKPPEETG) shows a compositional bias: basic and acidic residues. The disordered stretch occupies residues 249 to 270 (DAAVEARKKPPEETGPKMIGEG). S294 bears the Phosphoserine mark.

It belongs to the VAMP-associated protein (VAP) (TC 9.B.17) family.

Functionally, may play a role in vesicle trafficking. This Arabidopsis thaliana (Mouse-ear cress) protein is Vesicle-associated protein 4-2 (PVA42).